The following is a 337-amino-acid chain: Glyceraldehyde-3-phosphate dehydrogenase 1 (337 aa).

NAD(+)-binding positions include 12–13 (RI), Asp-34, and Met-79. D-glyceraldehyde 3-phosphate-binding positions include 151–153 (SCT), Thr-182, 211–212 (TG), and Arg-234. Catalysis depends on Cys-152, which acts as the Nucleophile. Asn-316 serves as a coordination point for NAD(+).

Belongs to the glyceraldehyde-3-phosphate dehydrogenase family. Homotetramer.

It is found in the cytoplasm. It catalyses the reaction D-glyceraldehyde 3-phosphate + phosphate + NAD(+) = (2R)-3-phospho-glyceroyl phosphate + NADH + H(+). It participates in carbohydrate degradation; glycolysis; pyruvate from D-glyceraldehyde 3-phosphate: step 1/5. In Giardia intestinalis (Giardia lamblia), this protein is Glyceraldehyde-3-phosphate dehydrogenase 1 (GAP1).